The sequence spans 770 residues: Metabotropic glutamate receptor-like protein F (770 aa).

An N-terminal signal peptide occupies residues 1 to 22 (MKIKNFIYFLIYFIFLFKVING). The Extracellular portion of the chain corresponds to 23–370 (QNKTCKISVL…STVDYPESLK (348 aa)). N-linked (GlcNAc...) asparagine glycosylation is found at Asn24, Asn185, Asn260, Asn286, Asn319, and Asn344. The helical transmembrane segment at 371–391 (IGVTVVSGFCIFLCLISMIIV) threads the bilayer. Over 392–405 (IKFKEAKVIKSSSP) the chain is Cytoplasmic. The chain crosses the membrane as a helical span at residues 406 to 426 (IFCLLILFGCIVIFVGCIMFA). At 427 to 442 (RSPTDGSCRSRVWLLS) the chain is on the extracellular side. The helical transmembrane segment at 443-463 (LGYTIFLGNLMVKNWRIWLLF) threads the bilayer. Topologically, residues 464-483 (DNPKLKKRAITNWKLYPWVS) are cytoplasmic. The chain crosses the membrane as a helical span at residues 484-504 (GIVIIDIVILSIWQALGDIVA). Residues 505–528 (ESRTGIDSLTKYEYRNVCASSDQG) are Extracellular-facing. The helical transmembrane segment at 529–549 (SIALYLLLVFHGLILLVACFI) threads the bilayer. Residues 550–565 (SFKIKVVDIEEFNESK) lie on the Cytoplasmic side of the membrane. Residues 566–586 (PITTSVYIITFCLFIVIPIMV) traverse the membrane as a helical segment. Residues 587-594 (SSPTVTTQ) are Extracellular-facing. The helical transmembrane segment at 595–615 (TTIICICALITTMLSIILLFG) threads the bilayer. The Cytoplasmic portion of the chain corresponds to 616 to 770 (TKFFKMITVG…GQTEIDSNDV (155 aa)). The disordered stretch occupies residues 639–740 (SSHSQRTKSS…EEKQKDEEEI (102 aa)). 2 stretches are compositionally biased toward basic and acidic residues: residues 676–693 (SSEK…KDHM) and 730–740 (NEEKQKDEEEI). The stretch at 715–760 (REQINDNIILENNNDNEEKQKDEEEIKEEKLLVSEIQAKRLSLEQN) forms a coiled coil.

It in the N-terminal section; belongs to the BMP lipoprotein family. The protein in the C-terminal section; belongs to the G-protein coupled receptor 3 family. GABA-B receptor subfamily.

Its subcellular location is the membrane. This chain is Metabotropic glutamate receptor-like protein F (grlF), found in Dictyostelium discoideum (Social amoeba).